Consider the following 387-residue polypeptide: GTP-binding protein 10 (387 aa).

The Obg domain maps to 13–148 (GNFIDKLRLF…RIIHLDLKLI (136 aa)). Residues 149–344 (ADVGLVGFPN…LKNCIRKSLD (196 aa)) form the OBG-type G domain. GTP-binding positions include 155-162 (GFPNAGKS), 202-206 (DLPGL), and 278-281 (NKMD).

The protein belongs to the TRAFAC class OBG-HflX-like GTPase superfamily. OBG GTPase family.

It is found in the nucleus. It localises to the nucleolus. Its subcellular location is the chromosome. In terms of biological role, may be involved in the ribosome maturation process. Complements an ObgE(CgtA) function in E.coli ribosome maturation. Plays a role of GTPase in vitro. When missing, disorganization of the nucleolar architecture is observed. The polypeptide is GTP-binding protein 10 (GTPBP10) (Homo sapiens (Human)).